Here is a 143-residue protein sequence, read N- to C-terminus: Large ribosomal subunit protein uL16 (143 aa).

Basic residues predominate over residues 1 to 14 (MLTPKRVKWRRQHR). The tract at residues 1–23 (MLTPKRVKWRRQHRPDRAGKAKG) is disordered.

The protein belongs to the universal ribosomal protein uL16 family. In terms of assembly, part of the 50S ribosomal subunit.

Its function is as follows. Binds 23S rRNA and is also seen to make contacts with the A and possibly P site tRNAs. The sequence is that of Large ribosomal subunit protein uL16 from Desulforudis audaxviator (strain MP104C).